A 110-amino-acid polypeptide reads, in one-letter code: UPF0060 membrane protein Nmul_A0351 (110 aa).

The next 4 helical transmembrane spans lie at 7-27 (LFLF…PYLW), 33-53 (SAWL…LLTL), 63-83 (AAYG…VDGV), and 87-107 (AWDM…MFGP).

Belongs to the UPF0060 family.

The protein localises to the cell inner membrane. This Nitrosospira multiformis (strain ATCC 25196 / NCIMB 11849 / C 71) protein is UPF0060 membrane protein Nmul_A0351.